Consider the following 143-residue polypeptide: Nucleoside diphosphate kinase (143 aa).

6 residues coordinate ATP: K11, F59, R87, T93, R104, and N114. H117 (pros-phosphohistidine intermediate) is an active-site residue.

The protein belongs to the NDK family. In terms of assembly, homotetramer. The cofactor is Mg(2+).

It is found in the cytoplasm. It carries out the reaction a 2'-deoxyribonucleoside 5'-diphosphate + ATP = a 2'-deoxyribonucleoside 5'-triphosphate + ADP. It catalyses the reaction a ribonucleoside 5'-diphosphate + ATP = a ribonucleoside 5'-triphosphate + ADP. Functionally, major role in the synthesis of nucleoside triphosphates other than ATP. The ATP gamma phosphate is transferred to the NDP beta phosphate via a ping-pong mechanism, using a phosphorylated active-site intermediate. The chain is Nucleoside diphosphate kinase from Shewanella frigidimarina (strain NCIMB 400).